Here is a 311-residue protein sequence, read N- to C-terminus: Protoheme IX farnesyltransferase (311 aa).

The next 9 helical transmembrane spans lie at 33–53, 55–75, 104–124, 127–147, 155–175, 181–201, 228–248, 252–272, and 287–307; these read VVMLMLLTSLIGMLLATPSPA, LWLLVLGNLGIGLCAGAAAAV, NALLFSALLGGVGLWILSSFI, LTAWLTLASLLGYAVIYTLFL, IVIGGLAGAAPPLLGWTAVTG, GLLLVLIIFAWTPPHFWALAL, IVLYTVILIAVTLLPFATRMM, YLVGALVLGAGFLYRALKLLV, and IIYLMALFVVMLVDHYLFPIP.

Belongs to the UbiA prenyltransferase family. Protoheme IX farnesyltransferase subfamily.

The protein resides in the cell inner membrane. The catalysed reaction is heme b + (2E,6E)-farnesyl diphosphate + H2O = Fe(II)-heme o + diphosphate. It functions in the pathway porphyrin-containing compound metabolism; heme O biosynthesis; heme O from protoheme: step 1/1. Functionally, converts heme B (protoheme IX) to heme O by substitution of the vinyl group on carbon 2 of heme B porphyrin ring with a hydroxyethyl farnesyl side group. In Teredinibacter turnerae (strain ATCC 39867 / T7901), this protein is Protoheme IX farnesyltransferase.